The chain runs to 90 residues: Exodeoxyribonuclease 7 small subunit (90 aa).

Positions 62-90 (QDGQANPMSSQGHTAGEYPDDEAEEAEEA) are disordered. Positions 64–74 (GQANPMSSQGH) are enriched in polar residues. Positions 79–90 (YPDDEAEEAEEA) are enriched in acidic residues.

It belongs to the XseB family. In terms of assembly, heterooligomer composed of large and small subunits.

It localises to the cytoplasm. The catalysed reaction is Exonucleolytic cleavage in either 5'- to 3'- or 3'- to 5'-direction to yield nucleoside 5'-phosphates.. Its function is as follows. Bidirectionally degrades single-stranded DNA into large acid-insoluble oligonucleotides, which are then degraded further into small acid-soluble oligonucleotides. In Desulfovibrio desulfuricans (strain ATCC 27774 / DSM 6949 / MB), this protein is Exodeoxyribonuclease 7 small subunit.